The primary structure comprises 589 residues: Mini-chromosome maintenance complex-binding protein (589 aa).

Residues 163 to 211 are disordered; that stretch reads VDEEMTDSMDSSTLEAGRNGSPFKKMKVGEATSSASESQVPQTSGIPPA. The segment covering 193 to 207 has biased composition (polar residues); that stretch reads ATSSASESQVPQTSG.

Belongs to the MCMBP family. Interacts with the MCM complex.

It localises to the nucleus. In terms of biological role, associated component of the MCM complex that acts as a regulator of DNA replication. Binds to the MCM complex during late S phase and may act by promoting the disassembly of the MCM complex from chromatin. Required for sister chromatid cohesion. This is Mini-chromosome maintenance complex-binding protein (ETG1) from Arabidopsis thaliana (Mouse-ear cress).